The sequence spans 502 residues: Cytochrome P450 monooxygenase AacuE (502 aa).

The chain crosses the membrane as a helical span at residues 4-26 (AITGLVATVTTFLAYIVFLSYTP). Asn-393 is a glycosylation site (N-linked (GlcNAc...) asparagine). Cys-439 serves as a coordination point for heme.

The protein belongs to the cytochrome P450 family. Heme serves as cofactor.

It is found in the membrane. It functions in the pathway secondary metabolite biosynthesis. Cytochrome P450 monooxygenase; part of the gene cluster that mediates the biosynthesis of the tetrahydroxanthone dimer secalonic acid D. The pathway begins with the synthesis of atrochrysone thioester by the polyketide synthase AacuL. The atrochrysone carboxyl ACP thioesterase AacuM then breaks the thioester bond and releases the atrochrysone carboxylic acid from AacuL. Atrochrysone carboxylic acid is decarboxylated by the decarboxylase AacuI, and oxidized by the anthrone oxygenase AacuG to yield emodin. Emodin is then reduced to emodin hydroquinone by a yet unidentified oxidoreductase. A-ring reduction by the short chain dehydrogenase AacuN, dehydration by the scytalone dehydratase-like protein AacuK and probable spontaneous re-oxidation, results in overall deoxygenation to chrysophanol. Baeyer-Villiger oxidation by the Baeyer-Villiger monooxygenase (BVMO) AacuH then yields monodictyphenone. Monodictyphenone is transformed into compounds with the tetrahydroxanthone skeleton via methylesterification by the methyltransferase AacuQ, followed by the action of the flavin-dependent monooxygenase AacuC, the isomerase AacuP, and the short chain dehydrogenase/reductase AacuF or AacuD. AacuF and AacuD should accept the same compound as a substrate but perform the ketoreduction with a different stereoselectivity, thus yielding blennolides B and A, respectively. In the final step of the biosynthesis, the cytochrome P450 monooxygenase AacuE accepts blennolide B and/or blennolide A to conduct the dimerization reaction to furnish the tetrahydroxanthone dimers, secalonic acids D, B, and F. This chain is Cytochrome P450 monooxygenase AacuE, found in Aspergillus aculeatus (strain ATCC 16872 / CBS 172.66 / WB 5094).